A 311-amino-acid polypeptide reads, in one-letter code: Aspartate carbamoyltransferase catalytic subunit (311 aa).

Carbamoyl phosphate-binding residues include arginine 55 and threonine 56. Residue lysine 85 coordinates L-aspartate. Carbamoyl phosphate is bound by residues arginine 106, histidine 135, and glutamine 138. Arginine 168 and arginine 230 together coordinate L-aspartate. 2 residues coordinate carbamoyl phosphate: leucine 268 and proline 269.

The protein belongs to the aspartate/ornithine carbamoyltransferase superfamily. ATCase family. Heterododecamer (2C3:3R2) of six catalytic PyrB chains organized as two trimers (C3), and six regulatory PyrI chains organized as three dimers (R2).

It carries out the reaction carbamoyl phosphate + L-aspartate = N-carbamoyl-L-aspartate + phosphate + H(+). It functions in the pathway pyrimidine metabolism; UMP biosynthesis via de novo pathway; (S)-dihydroorotate from bicarbonate: step 2/3. Its function is as follows. Catalyzes the condensation of carbamoyl phosphate and aspartate to form carbamoyl aspartate and inorganic phosphate, the committed step in the de novo pyrimidine nucleotide biosynthesis pathway. This is Aspartate carbamoyltransferase catalytic subunit from Salmonella arizonae (strain ATCC BAA-731 / CDC346-86 / RSK2980).